The sequence spans 94 residues: Ubiquitin-like protein ATG12B (94 aa).

Alanine 2 is subject to N-acetylalanine. A Glycyl lysine isopeptide (Gly-Lys) (interchain with K-128 in ATG5) cross-link involves residue glycine 94.

Belongs to the ATG12 family. As to expression, ubiquitous.

The protein resides in the cytoplasm. Functionally, ubiquitin-like protein involved in cytoplasm to vacuole transport (Cvt) and autophagy vesicles formation. Conjugation with ATG5 through a ubiquitin-like conjugating system involving also ATG7 as an E1-like activating enzyme and ATG10 as an E2-like conjugating enzyme, is essential for its function. ATG12/ATG5 conjugate has an essential role in plant nutrient recycling. The sequence is that of Ubiquitin-like protein ATG12B (ATG12B) from Arabidopsis thaliana (Mouse-ear cress).